The primary structure comprises 288 residues: Homoserine kinase (288 aa).

79–89 (PPARGLGSSSA) serves as a coordination point for ATP.

Belongs to the GHMP kinase family. Homoserine kinase subfamily.

The protein localises to the cytoplasm. The enzyme catalyses L-homoserine + ATP = O-phospho-L-homoserine + ADP + H(+). It functions in the pathway amino-acid biosynthesis; L-threonine biosynthesis; L-threonine from L-aspartate: step 4/5. In terms of biological role, catalyzes the ATP-dependent phosphorylation of L-homoserine to L-homoserine phosphate. In Listeria monocytogenes serotype 4b (strain CLIP80459), this protein is Homoserine kinase.